A 360-amino-acid chain; its full sequence is Phospho-N-acetylmuramoyl-pentapeptide-transferase (360 aa).

The next 10 membrane-spanning stretches (helical) occupy residues 27–47 (IVSL…MIAF), 71–91 (TPTM…LLWV), 94–114 (NNPY…VGFV), 132–152 (WKYF…YSFG), 168–188 (VMPQ…VGTS), 199–219 (GLAI…AWAT), 236–256 (AGEL…FLWF), 263–283 (VFMG…IAVL), 288–308 (FLLV…ILQV), and 338–358 (VIVR…ATLK).

Belongs to the glycosyltransferase 4 family. MraY subfamily. Mg(2+) is required as a cofactor.

It is found in the cell inner membrane. It catalyses the reaction UDP-N-acetyl-alpha-D-muramoyl-L-alanyl-gamma-D-glutamyl-meso-2,6-diaminopimeloyl-D-alanyl-D-alanine + di-trans,octa-cis-undecaprenyl phosphate = di-trans,octa-cis-undecaprenyl diphospho-N-acetyl-alpha-D-muramoyl-L-alanyl-D-glutamyl-meso-2,6-diaminopimeloyl-D-alanyl-D-alanine + UMP. Its pathway is cell wall biogenesis; peptidoglycan biosynthesis. Its function is as follows. Catalyzes the initial step of the lipid cycle reactions in the biosynthesis of the cell wall peptidoglycan: transfers peptidoglycan precursor phospho-MurNAc-pentapeptide from UDP-MurNAc-pentapeptide onto the lipid carrier undecaprenyl phosphate, yielding undecaprenyl-pyrophosphoryl-MurNAc-pentapeptide, known as lipid I. This Photorhabdus laumondii subsp. laumondii (strain DSM 15139 / CIP 105565 / TT01) (Photorhabdus luminescens subsp. laumondii) protein is Phospho-N-acetylmuramoyl-pentapeptide-transferase.